The chain runs to 150 residues: Actin-related protein 2/3 complex subunit 5-C (150 aa).

Positions 21–45 (NKFVDEEEAGEGQQGPDEGEVDSAI) are disordered.

The protein belongs to the ARPC5 family. As to quaternary structure, component of the Arp2/3 complex composed of actr2/arp2, actr3/arp3, arpc1 (arpc1a or arpc1b), arpc2, arpc3, arpc4 and arpc5.

It is found in the cytoplasm. It localises to the cytoskeleton. Its subcellular location is the cell projection. The protein localises to the nucleus. Its function is as follows. Component of the Arp2/3 complex, a multiprotein complex that mediates actin polymerization upon stimulation by nucleation-promoting factor (NPF). The Arp2/3 complex mediates the formation of branched actin networks in the cytoplasm, providing the force for cell motility. In addition to its role in the cytoplasmic cytoskeleton, the Arp2/3 complex also promotes actin polymerization in the nucleus, thereby regulating gene transcription and repair of damaged DNA. The Arp2/3 complex promotes homologous recombination (HR) repair in response to DNA damage by promoting nuclear actin polymerization, leading to drive motility of double-strand breaks (DSBs). The sequence is that of Actin-related protein 2/3 complex subunit 5-C (arpc5-c) from Xenopus laevis (African clawed frog).